Reading from the N-terminus, the 118-residue chain is Large ribosomal subunit protein bL20 (118 aa).

This sequence belongs to the bacterial ribosomal protein bL20 family.

Binds directly to 23S ribosomal RNA and is necessary for the in vitro assembly process of the 50S ribosomal subunit. It is not involved in the protein synthesizing functions of that subunit. The protein is Large ribosomal subunit protein bL20 (rplT) of Buchnera aphidicola subsp. Acyrthosiphon pisum (strain APS) (Acyrthosiphon pisum symbiotic bacterium).